Consider the following 512-residue polypeptide: Cytochrome P450 4d1 (512 aa).

Heme is bound by residues glutamate 316 and cysteine 456.

This sequence belongs to the cytochrome P450 family. Heme serves as cofactor.

The protein resides in the endoplasmic reticulum membrane. It localises to the microsome membrane. Involved in the metabolism of insect hormones and in the breakdown of synthetic insecticides. In Drosophila melanogaster (Fruit fly), this protein is Cytochrome P450 4d1 (Cyp4d1).